The following is a 228-amino-acid chain: MKFAVLVFPGSNCDADLYHAIVDVCHEEAAYVSYTATSLAGFDAVLIPGGFSYDDYLRSGAIAKLAPIMTAVVAFAKAGKPVLGICNGFQILTEAGLLPGALLPNRQTHFICETVTLQVENNDTRFTNQYAKGATIALPIAHGEGNYYCDPETLAQLHANHQIAFTYTTDVNGSLDNIAGITNEAGNVLGMMPHPERAVEVLLGSADGLGVFQSILTTLKSGVVTHGE.

Residues 3–225 (FAVLVFPGSN…LTTLKSGVVT (223 aa)) enclose the Glutamine amidotransferase type-1 domain. Catalysis depends on Cys-86, which acts as the Nucleophile. Active-site residues include His-194 and Glu-196.

In terms of assembly, part of the FGAM synthase complex composed of 1 PurL, 1 PurQ and 2 PurS subunits.

The protein resides in the cytoplasm. It carries out the reaction N(2)-formyl-N(1)-(5-phospho-beta-D-ribosyl)glycinamide + L-glutamine + ATP + H2O = 2-formamido-N(1)-(5-O-phospho-beta-D-ribosyl)acetamidine + L-glutamate + ADP + phosphate + H(+). The catalysed reaction is L-glutamine + H2O = L-glutamate + NH4(+). The protein operates within purine metabolism; IMP biosynthesis via de novo pathway; 5-amino-1-(5-phospho-D-ribosyl)imidazole from N(2)-formyl-N(1)-(5-phospho-D-ribosyl)glycinamide: step 1/2. Its function is as follows. Part of the phosphoribosylformylglycinamidine synthase complex involved in the purines biosynthetic pathway. Catalyzes the ATP-dependent conversion of formylglycinamide ribonucleotide (FGAR) and glutamine to yield formylglycinamidine ribonucleotide (FGAM) and glutamate. The FGAM synthase complex is composed of three subunits. PurQ produces an ammonia molecule by converting glutamine to glutamate. PurL transfers the ammonia molecule to FGAR to form FGAM in an ATP-dependent manner. PurS interacts with PurQ and PurL and is thought to assist in the transfer of the ammonia molecule from PurQ to PurL. The chain is Phosphoribosylformylglycinamidine synthase subunit PurQ from Latilactobacillus sakei subsp. sakei (strain 23K) (Lactobacillus sakei subsp. sakei).